The following is a 163-amino-acid chain: MALNLQDKQAIVAEVNEAAKGALSAVIADSRGVTVEKMTELRKSAREAGVTMRVVRNTLLRRAVEGTDYECLKDTFVGPTLIAFSNEHPGAAARLFKEFAKANDKFEIKGAAFEGKIQDVEFLATLPTYEEAIARLMGTMKEAAAGKLARTLAALRDKLQEAA.

It belongs to the universal ribosomal protein uL10 family. As to quaternary structure, part of the ribosomal stalk of the 50S ribosomal subunit. The N-terminus interacts with L11 and the large rRNA to form the base of the stalk. The C-terminus forms an elongated spine to which L12 dimers bind in a sequential fashion forming a multimeric L10(L12)X complex.

Forms part of the ribosomal stalk, playing a central role in the interaction of the ribosome with GTP-bound translation factors. This Haemophilus influenzae (strain PittGG) protein is Large ribosomal subunit protein uL10.